Reading from the N-terminus, the 275-residue chain is Putative carbamate hydrolase RutD (275 aa).

Residues 15–116 (TVVLSSGLGG…SLVVINGWTV (102 aa)) form the AB hydrolase-1 domain.

Belongs to the AB hydrolase superfamily. Hydrolase RutD family.

It carries out the reaction carbamate + 2 H(+) = NH4(+) + CO2. Its function is as follows. Involved in pyrimidine catabolism. May facilitate the hydrolysis of carbamate, a reaction that can also occur spontaneously. The chain is Putative carbamate hydrolase RutD from Pantoea ananatis (strain LMG 20103).